Here is a 186-residue protein sequence, read N- to C-terminus: Large ribosomal subunit protein eL18 (186 aa).

The protein belongs to the eukaryotic ribosomal protein eL18 family. Component of the large ribosomal subunit. Mature ribosomes consist of a small (40S) and a large (60S) subunit. The 40S subunit contains about 32 different proteins and 1 molecule of RNA (18S). The 60S subunit contains 45 different proteins and 3 molecules of RNA (25S, 5.8S and 5S).

The protein localises to the cytoplasm. Its function is as follows. Component of the ribosome, a large ribonucleoprotein complex responsible for the synthesis of proteins in the cell. The small ribosomal subunit (SSU) binds messenger RNAs (mRNAs) and translates the encoded message by selecting cognate aminoacyl-transfer RNA (tRNA) molecules. The large subunit (LSU) contains the ribosomal catalytic site termed the peptidyl transferase center (PTC), which catalyzes the formation of peptide bonds, thereby polymerizing the amino acids delivered by tRNAs into a polypeptide chain. The nascent polypeptides leave the ribosome through a tunnel in the LSU and interact with protein factors that function in enzymatic processing, targeting, and the membrane insertion of nascent chains at the exit of the ribosomal tunnel. The polypeptide is Large ribosomal subunit protein eL18 (Candida albicans (strain SC5314 / ATCC MYA-2876) (Yeast)).